The following is a 195-amino-acid chain: Transcription factor 15 (195 aa).

A disordered region spans residues 44 to 65; that stretch reads LEAARRGPGPGSGRRASNGAGP. Positions 56–65 are enriched in low complexity; that stretch reads GRRASNGAGP. At S60 the chain carries Phosphoserine. The region spanning 70 to 122 is the bHLH domain; it reads RQRQAANARERDRTQSVNTAFTALRTLIPTEPVDRKLSKIETLRLASSYIAHL.

Heterodimer; efficient DNA binding requires dimerization with another bHLH protein, such as TCF3/E12. Interacts with MEOX2. As to expression, expressed in heart and skeletal muscle. Specifically expressed in a subpopulation of embryonic stem cells (ESCs), that are still undifferentiated but primed for ifferentiation. Expressed in hematopoietic stem cells (HSCs).

The protein localises to the nucleus. Its function is as follows. Early transcription factor that plays a key role in somitogenesis, paraxial mesoderm development and regulation of stem cell pluripotency. Essential for the mesenchymal to epithelial transition associated with somite formation. Required for somite morphogenesis, thereby regulating patterning of the axial skeleton and skeletal muscles. Required for proper localization of somite epithelium markers during the mesenchymal to epithelial transition. Also plays a key role in regulation of stem cell pluripotency. Promotes pluripotency exit of embryonic stem cells (ESCs) by priming ESCs for differentiation. Acts as a key regulator of self-renewal of hematopoietic stem cells (HSCs) by mediating HSCs quiescence and long-term self-renewal. Together with MEOX2, regulates transcription in heart endothelial cells to regulate fatty acid transport across heart endothelial cells. Acts by forming a heterodimer with another helix-loop-helix (bHLH) protein, such as TCF3/E12, that binds DNA on E-box motifs (5'-CANNTG-3') and activates transcription of target genes. In Mus musculus (Mouse), this protein is Transcription factor 15.